The following is a 790-amino-acid chain: MSRRRHSYENDGGQPHKRRKTSDANETEDHLESLICKVGEKSACSLESNLEGLAGVLEADLPNYKSKILRLLCTVARLLPEKLTIYTTLVGLLNARNYNFGGEFVEAMIRQLKESLKANNYNEAVYLVRFLSDLVNCHVIAAPSMVAMFENFVSVTQEEDVPQVRRDWYVYAFLSSLPWVGKELYEKKDAEMDRIFSSTESYLKRRQKTHVPMLQVWTADKPHPQEEYLDCLWAQIQKLKKDRWQERHILRPYLAFDSILCEALQHNLPPFTPPPHTEDSVYPMPRVIFRMFDYTDDPEGPVMPGSHSVERFVIEENLHCIIKSYWKERKTCAAQLVSYPGKNKIPLNYHIVEVIFAELFQLPAPPHIDVMYTTLLIELCKLQPGSLPQVLAQATEMLYMRLDTMSTTCVDRFINWFSHHLSNFQFRWSWEDWSDCLTQDLESPKPKFVREVLEKCMRLSYHQHILDIVPPTFSALCPANPTCIYKYGDESSNSLPGHSVALCLSVAFKSKATNDEIFSILKDVPNPNQVDDDDEGFRFNPLKIEVFVQTLLHLAAKSFSHSFSALAKFHEVFKTLAESDKGKLHVLRVMFEVWRNHPQMIAVLVDKMIRTQIVDCAAVANWIFSSELSRDFTRLFVWEILHSTIRKMNKHVLKIQKELEEAKEKLARQHKRRSDDDDRGSDRKDGALEEQIERLQEKVESAQSEQKNLFLVIFQRFIMILTEHLVRCETDGTSILTPWYKNCIERLQQIFLQHHQIIQQYMVTLENLLFTAELDPHILAVFQQFCALQA.

The tract at residues 1–26 (MSRRRHSYENDGGQPHKRRKTSDANE) is disordered. Positions 3–20 (RRRHSYENDGGQPHKRRK) match the Nuclear localization signal motif. Ser-7 carries the post-translational modification Phosphoserine. The residue at position 21 (Thr-21) is a Phosphothreonine. Residues Ser-22 and Ser-201 each carry the phosphoserine modification. In terms of domain architecture, MIF4G spans 28 to 240 (EDHLESLICK…CLWAQIQKLK (213 aa)). An N6-acetyllysine modification is found at Lys-204. Positions 643–713 (STIRKMNKHV…SEQKNLFLVI (71 aa)) form a coiled coil. Residue Lys-684 forms a Glycyl lysine isopeptide (Lys-Gly) (interchain with G-Cter in SUMO2) linkage. The residue at position 698 (Lys-698) is an N6-acetyllysine.

It belongs to the NCBP1 family. Component of the nuclear cap-binding complex (CBC), a heterodimer composed of NCBP1/CBP80 and NCBP2/CBP20 that interacts with m7GpppG-capped RNA. Found in a U snRNA export complex containing PHAX/RNUXA, NCBP1/CBP80, NCBP2/CBP20, RAN, XPO1 and m7G-capped RNA. Identified in a IGF2BP1-dependent mRNP granule complex containing untranslated mRNAs. Interacts with PHAX/RNUXA, SRRT/ARS2, EIF4G2, IGF2BP1, HNRNPF, HNRNPH1, KIAA0427/CTIF, PARN, DROSHA, UPF1 and ALYREF/THOC4. May interact with EIF4G1; the interaction is however controversial since it is reported by, and, but is not observed by. The large PER complex involved in the repression of transcriptional termination is composed of at least PER2, CDK9, DDX5, DHX9, NCBP1/CBP80 and POLR2A. Component of an alternative nuclear cap-binding complex (CBC) composed of NCBP1/CBP80 and NCBP3. Interacts with METTL3. Interacts with ZFC3H1 in a RNase-insensitive manner. Interacts with MTREX. Interacts with TASOR. Interacts with DHX34; the interaction is RNA-dependent. Interacts with KPNA3. In terms of processing, dephosphorylated at Thr-21 by the PNUTS-PP1 complex during RNA polymerase II transcription pause-release.

It is found in the nucleus. The protein localises to the cytoplasm. Component of the cap-binding complex (CBC), which binds cotranscriptionally to the 5'-cap of pre-mRNAs and is involved in various processes such as pre-mRNA splicing, translation regulation, nonsense-mediated mRNA decay, RNA-mediated gene silencing (RNAi) by microRNAs (miRNAs) and mRNA export. The CBC complex is involved in mRNA export from the nucleus via its interaction with ALYREF/THOC4/ALY, leading to the recruitment of the mRNA export machinery to the 5'-end of mRNA and to mRNA export in a 5' to 3' direction through the nuclear pore. The CBC complex is also involved in mediating U snRNA and intronless mRNAs export from the nucleus. The CBC complex is essential for a pioneer round of mRNA translation, before steady state translation when the CBC complex is replaced by cytoplasmic cap-binding protein eIF4E. The pioneer round of mRNA translation mediated by the CBC complex plays a central role in nonsense-mediated mRNA decay (NMD), NMD only taking place in mRNAs bound to the CBC complex, but not on eIF4E-bound mRNAs. The CBC complex enhances NMD in mRNAs containing at least one exon-junction complex (EJC) via its interaction with UPF1, promoting the interaction between UPF1 and UPF2. The CBC complex is also involved in 'failsafe' NMD, which is independent of the EJC complex, while it does not participate in Staufen-mediated mRNA decay (SMD). During cell proliferation, the CBC complex is also involved in microRNAs (miRNAs) biogenesis via its interaction with SRRT/ARS2 and is required for miRNA-mediated RNA interference. The CBC complex also acts as a negative regulator of PARN, thereby acting as an inhibitor of mRNA deadenylation. In the CBC complex, NCBP1/CBP80 does not bind directly capped RNAs (m7GpppG-capped RNA) but is required to stabilize the movement of the N-terminal loop of NCBP2/CBP20 and lock the CBC into a high affinity cap-binding state with the cap structure. Associates with NCBP3 to form an alternative cap-binding complex (CBC) which plays a key role in mRNA export and is particularly important in cellular stress situations such as virus infections. The conventional CBC with NCBP2 binds both small nuclear RNA (snRNA) and messenger (mRNA) and is involved in their export from the nucleus whereas the alternative CBC with NCBP3 does not bind snRNA and associates only with mRNA thereby playing a role only in mRNA export. NCBP1/CBP80 is required for cell growth and viability. This is Nuclear cap-binding protein subunit 1 (Ncbp1) from Rattus norvegicus (Rat).